The following is a 324-amino-acid chain: Malate dehydrogenase (324 aa).

NAD(+)-binding positions include 20-25 (GAGNVG) and D44. R93 and R99 together coordinate substrate. Residues N106 and 129–131 (VTN) each bind NAD(+). Substrate contacts are provided by N131 and R162. H186 serves as the catalytic Proton acceptor.

This sequence belongs to the LDH/MDH superfamily. MDH type 3 family.

It catalyses the reaction (S)-malate + NAD(+) = oxaloacetate + NADH + H(+). Its function is as follows. Catalyzes the reversible oxidation of malate to oxaloacetate. The sequence is that of Malate dehydrogenase from Synechocystis sp. (strain ATCC 27184 / PCC 6803 / Kazusa).